We begin with the raw amino-acid sequence, 357 residues long: Cinnamyl alcohol dehydrogenase 7 (357 aa).

Cys-46 is a binding site for Zn(2+). An NADP(+)-binding site is contributed by Thr-48. Positions 68, 69, 99, 102, 105, 113, and 162 each coordinate Zn(2+). NADP(+)-binding positions include Thr-166, 187-192 (GLGGLG), 210-215 (STSERK), Thr-250, Gly-274, and 297-299 (SMV).

Belongs to the zinc-containing alcohol dehydrogenase family. In terms of assembly, homodimer. Zn(2+) is required as a cofactor. Expressed in the differentiation and elongation zones of primary and lateral roots. Expressed in the hypocotyl, cotyledon and leaf veins, hydathodes and trichomes. In stems, expressed in the vascular cambium region. Expressed in the style, anthers, stamen filaments, vascular tissues of sepals and stigmatic regions in flowers, and abscission, style and stigmatic regions of siliques and seed testa.

It catalyses the reaction (E)-cinnamyl alcohol + NADP(+) = (E)-cinnamaldehyde + NADPH + H(+). It participates in aromatic compound metabolism; phenylpropanoid biosynthesis. Involved in lignin biosynthesis. Catalyzes the final step specific for the production of lignin monomers. Catalyzes the NADPH-dependent reduction of coniferaldehyde, 5-hydroxyconiferaldehyde, sinapaldehyde, 4-coumaraldehyde and caffeyl aldehyde to their respective alcohols. The sequence is that of Cinnamyl alcohol dehydrogenase 7 (CAD7) from Arabidopsis thaliana (Mouse-ear cress).